A 201-amino-acid chain; its full sequence is Beta-lactamase inhibitory protein (201 aa).

A signal peptide spans 1–36 (MRTVGIGAGVRRLGRAVVMAAAVGGLVLGSAGASNA). Repeat copies occupy residues 37–112 (AGVM…EKLL) and 116–201 (APTL…WDLV). Cystine bridges form between C66/C78 and C145/C167.

Interacts with E.coli beta-lactamase TEM-1; interaction inhibits hydrolysis of beta-lactam antibiotics. Interacts with K.pneumoniae beta-lactamase SHV-1. Interacts with K.pneumoniae beta-lactamases KPC-2 and KPC-3; interaction inhibits hydrolysis of beta-lactam antibiotics. Interacts with E.coli beta-lactamases CTX-M-14 and CTX-M-15; interaction inhibits hydrolysis of beta-lactam antibiotics.

Its subcellular location is the secreted. In terms of biological role, inhibits a wide variety of beta lactamases. In Streptomyces clavuligerus, this protein is Beta-lactamase inhibitory protein.